We begin with the raw amino-acid sequence, 129 residues long: uncharacterized protein (129 aa).

The next 3 membrane-spanning stretches (helical) occupy residues 22–42, 55–75, and 88–108; these read LASS…FFFF, VGSF…FFFF, and LPFT…FFFF.

Its subcellular location is the membrane. This is an uncharacterized protein from Saccharomyces cerevisiae (strain ATCC 204508 / S288c) (Baker's yeast).